The sequence spans 131 residues: C-type natriuretic peptide 1 (131 aa).

The signal sequence occupies residues 1 to 22; sequence MLCPVLLCATLLLLTPFEVTEA. A propeptide spanning residues 23-109 is cleaved from the precursor; the sequence is RALHPSADAV…KRAEPDRSRR (87 aa). A disulfide bond links Cys115 and Cys131.

It belongs to the natriuretic peptide family. As to expression, brain and spinal cord.

The protein resides in the secreted. In terms of biological role, exhibits natriuretic and vasodepressant activity. Has cGMP-stimulating activity. May help to regulate body fluid homeostasis in a variety of aquatic environments. This is C-type natriuretic peptide 1 from Oryzias latipes (Japanese rice fish).